The chain runs to 392 residues: HORMA domain-containing protein 1 (392 aa).

Residues 25–227 (QQSLMFVKRL…TPFHTFRLKV (203 aa)) enclose the HORMA domain. Disordered stretches follow at residues 271–292 (IKTK…EPNL) and 371–392 (LESS…NEHT). Ser-374 carries the phosphoserine modification. The short motif at 381-384 (KRRR) is the Nuclear localization signal element.

In terms of assembly, interacts with HORMAD2. Interacts with IHO1. Phosphorylated at Ser-375 in a SPO11-dependent manner.

It is found in the nucleus. The protein resides in the chromosome. Plays a key role in meiotic progression. Regulates 3 different functions during meiosis: ensures that sufficient numbers of processed DNA double-strand breaks (DSBs) are available for successful homology search by increasing the steady-state numbers of single-stranded DSB ends. Promotes synaptonemal-complex formation independently of its role in homology search. Plays a key role in the male mid-pachytene checkpoint and the female meiotic prophase checkpoint: required for efficient build-up of ATR activity on unsynapsed chromosome regions, a process believed to form the basis of meiotic silencing of unsynapsed chromatin (MSUC) and meiotic prophase quality control in both sexes. In Rattus norvegicus (Rat), this protein is HORMA domain-containing protein 1 (Hormad1).